The primary structure comprises 465 residues: Phospholipase A1-II 5 (465 aa).

Residue S233 is the Acyl-ester intermediate of the active site. Catalysis depends on charge relay system residues S233, D297, and H336.

The protein belongs to the AB hydrolase superfamily. Lipase family.

The protein localises to the cytoplasm. Functionally, acylhydrolase that catalyzes the hydrolysis of phospholipids at the sn-1 position. This chain is Phospholipase A1-II 5, found in Oryza sativa subsp. japonica (Rice).